The primary structure comprises 443 residues: ATP-dependent protease ATPase subunit HslU (443 aa).

ATP contacts are provided by residues isoleucine 18 and 60–65 (GVGKTE). Residues 139–161 (ARDSGFDANPSEENNATRQKFRK) are disordered. Positions 256, 321, and 393 each coordinate ATP.

It belongs to the ClpX chaperone family. HslU subfamily. A double ring-shaped homohexamer of HslV is capped on each side by a ring-shaped HslU homohexamer. The assembly of the HslU/HslV complex is dependent on binding of ATP.

It is found in the cytoplasm. In terms of biological role, ATPase subunit of a proteasome-like degradation complex; this subunit has chaperone activity. The binding of ATP and its subsequent hydrolysis by HslU are essential for unfolding of protein substrates subsequently hydrolyzed by HslV. HslU recognizes the N-terminal part of its protein substrates and unfolds these before they are guided to HslV for hydrolysis. The chain is ATP-dependent protease ATPase subunit HslU from Nitrosomonas eutropha (strain DSM 101675 / C91 / Nm57).